A 119-amino-acid polypeptide reads, in one-letter code: uncharacterized protein (119 aa).

A helical transmembrane segment spans residues 80 to 104 (VFPLVYLFCVVFQFLSLGCYLSIFF).

The protein resides in the membrane. This is an uncharacterized protein from Saccharomyces cerevisiae (strain ATCC 204508 / S288c) (Baker's yeast).